We begin with the raw amino-acid sequence, 454 residues long: C4-dicarboxylate transport protein (454 aa).

9 helical membrane-spanning segments follow: residues 33–53, 66–86, 101–121, 148–168, 170–190, 210–230, 243–263, 354–374, and 377–397; these read VQVL…PDIG, LVKM…IAGM, IYFL…ANLV, EQSI…GAFA, GDIL…AIVG, LVAI…AFTI, MLIG…LGAV, LLLV…AGFI, and AATL…ILGI.

This sequence belongs to the dicarboxylate/amino acid:cation symporter (DAACS) (TC 2.A.23) family.

The protein localises to the cell inner membrane. Functionally, responsible for the transport of dicarboxylates such as succinate, fumarate, and malate from the periplasm across the membrane. This chain is C4-dicarboxylate transport protein, found in Sinorhizobium medicae (strain WSM419) (Ensifer medicae).